The chain runs to 185 residues: Ribosome-recycling factor (185 aa).

A compositionally biased stretch (basic and acidic residues) spans 142-164; the sequence is IKKDGDAGEDDVTRAEKDLDKST. The interval 142 to 173 is disordered; that stretch reads IKKDGDAGEDDVTRAEKDLDKSTHQYTSQVDD.

This sequence belongs to the RRF family.

The protein localises to the cytoplasm. Its function is as follows. Responsible for the release of ribosomes from messenger RNA at the termination of protein biosynthesis. May increase the efficiency of translation by recycling ribosomes from one round of translation to another. This is Ribosome-recycling factor from Mycolicibacterium gilvum (strain PYR-GCK) (Mycobacterium gilvum (strain PYR-GCK)).